A 533-amino-acid polypeptide reads, in one-letter code: Probable DNA ligase (533 aa).

Glutamate 211 is a binding site for ATP. Lysine 213 (N6-AMP-lysine intermediate) is an active-site residue. 6 residues coordinate ATP: arginine 218, arginine 233, glutamate 262, phenylalanine 302, arginine 374, and lysine 380. Residues 512–533 are disordered; the sequence is LAGEAAEKGQAEGGGEELEDDG.

This sequence belongs to the ATP-dependent DNA ligase family. Requires Mg(2+) as cofactor.

The catalysed reaction is ATP + (deoxyribonucleotide)n-3'-hydroxyl + 5'-phospho-(deoxyribonucleotide)m = (deoxyribonucleotide)n+m + AMP + diphosphate.. Functionally, DNA ligase that seals nicks in double-stranded DNA during DNA replication, DNA recombination and DNA repair. The sequence is that of Probable DNA ligase from Sorangium cellulosum (strain So ce56) (Polyangium cellulosum (strain So ce56)).